The primary structure comprises 387 residues: Phosphoglycerate kinase (387 aa).

Residues aspartate 21–asparagine 23, arginine 36, histidine 59–arginine 62, arginine 113, and arginine 146 each bind substrate. ATP-binding positions include lysine 197, glutamate 314, and glycine 340 to threonine 343.

The protein belongs to the phosphoglycerate kinase family. Monomer.

It localises to the cytoplasm. It catalyses the reaction (2R)-3-phosphoglycerate + ATP = (2R)-3-phospho-glyceroyl phosphate + ADP. It participates in carbohydrate degradation; glycolysis; pyruvate from D-glyceraldehyde 3-phosphate: step 2/5. The chain is Phosphoglycerate kinase from Proteus mirabilis (strain HI4320).